Consider the following 372-residue polypeptide: Glutamine synthetase (372 aa).

One can recognise a GS beta-grasp domain in the interval 24 to 103 (VIAEYVWVDG…VLAECFNSDG (80 aa)). The GS catalytic domain occupies 110–372 (HRHEANKLFQ…KEYERETNEQ (263 aa)).

It belongs to the glutamine synthetase family. As to quaternary structure, homooctamer.

The protein resides in the cytoplasm. It carries out the reaction L-glutamate + NH4(+) + ATP = L-glutamine + ADP + phosphate + H(+). The sequence is that of Glutamine synthetase (GLN1) from Candida glabrata (strain ATCC 2001 / BCRC 20586 / JCM 3761 / NBRC 0622 / NRRL Y-65 / CBS 138) (Yeast).